The chain runs to 281 residues: 2-dehydro-3-deoxyphosphooctonate aldolase 1 (281 aa).

Belongs to the KdsA family.

It is found in the cytoplasm. It catalyses the reaction D-arabinose 5-phosphate + phosphoenolpyruvate + H2O = 3-deoxy-alpha-D-manno-2-octulosonate-8-phosphate + phosphate. It functions in the pathway carbohydrate biosynthesis; 3-deoxy-D-manno-octulosonate biosynthesis; 3-deoxy-D-manno-octulosonate from D-ribulose 5-phosphate: step 2/3. The protein operates within bacterial outer membrane biogenesis; lipopolysaccharide biosynthesis. The protein is 2-dehydro-3-deoxyphosphooctonate aldolase 1 (kdsA1) of Pseudomonas putida (strain ATCC 47054 / DSM 6125 / CFBP 8728 / NCIMB 11950 / KT2440).